The primary structure comprises 543 residues: MTRYIFVTGGVVSSLGKGIASASLAAILEARGLKVTMLKLDPYINVDPGTMSPFQHGEVFVTHDGAETDLDLGHYERFIRTRMTQNNNFTTGRVYEDVLRRERRGDYLGATIQVIPHITDEIKRRIIKGAGDADVALVEVGGTVGDIESQPFLEAIRQLRVEVGAKRAMLMHLTLVPYIATAGETKTKPTQHSVKELRSIGLQPDVLVCRSDRAIDVSSRRKIALFTNVEERAVISLPDADTIYKIPGILHAQGLDDYVVERFGLECRGADLSEWDRVVDAKLHPEKEVNIAMVGKYMELLDAYKSLIEAMSHAGIQSRTKVNLRYIDSEDIENQGTGLLEGVDAILVPGGFGLRGVEGKIATVRYARENKIPYLGICLGMQVAVIEFARDVLGWSDANSTEFDKDSGHPVVGLITEWADASGNTEVRTEASDLGGTMRLGAQECGLEPGSKVFECYGKERIVERHRHRYEVNNNLLPQLQAAGLKITGRSGDGALVEVVEAPDHPWFVACQFHPEFTSTPRDGHPLFSGFVNAALEYKAKKA.

Residues 1–265 (MTRYIFVTGG…DDYVVERFGL (265 aa)) are amidoligase domain. Ser13 contacts CTP. UTP is bound at residue Ser13. ATP contacts are provided by residues 14–19 (SLGKGI) and Asp71. Positions 71 and 139 each coordinate Mg(2+). CTP contacts are provided by residues 146-148 (DIE), 186-191 (KTKPTQ), and Lys222. UTP is bound by residues 186–191 (KTKPTQ) and Lys222. Residues 290–541 (NIAMVGKYME…VNAALEYKAK (252 aa)) form the Glutamine amidotransferase type-1 domain. L-glutamine is bound at residue Gly351. Residue Cys378 is the Nucleophile; for glutamine hydrolysis of the active site. Residues 379–382 (LGMQ), Glu402, and Arg469 each bind L-glutamine. Catalysis depends on residues His514 and Glu516.

It belongs to the CTP synthase family. In terms of assembly, homotetramer.

The enzyme catalyses UTP + L-glutamine + ATP + H2O = CTP + L-glutamate + ADP + phosphate + 2 H(+). It carries out the reaction L-glutamine + H2O = L-glutamate + NH4(+). It catalyses the reaction UTP + NH4(+) + ATP = CTP + ADP + phosphate + 2 H(+). It functions in the pathway pyrimidine metabolism; CTP biosynthesis via de novo pathway; CTP from UDP: step 2/2. Allosterically activated by GTP, when glutamine is the substrate; GTP has no effect on the reaction when ammonia is the substrate. The allosteric effector GTP functions by stabilizing the protein conformation that binds the tetrahedral intermediate(s) formed during glutamine hydrolysis. Inhibited by the product CTP, via allosteric rather than competitive inhibition. In terms of biological role, catalyzes the ATP-dependent amination of UTP to CTP with either L-glutamine or ammonia as the source of nitrogen. Regulates intracellular CTP levels through interactions with the four ribonucleotide triphosphates. The polypeptide is CTP synthase (Stutzerimonas stutzeri (strain A1501) (Pseudomonas stutzeri)).